A 433-amino-acid chain; its full sequence is Ribosomal RNA small subunit methyltransferase B (433 aa).

Residues Cys-254–Lys-260, Asp-277, Asp-303, and Asp-322 each bind S-adenosyl-L-methionine. Cys-375 (nucleophile) is an active-site residue.

It belongs to the class I-like SAM-binding methyltransferase superfamily. RsmB/NOP family.

It is found in the cytoplasm. The enzyme catalyses cytidine(967) in 16S rRNA + S-adenosyl-L-methionine = 5-methylcytidine(967) in 16S rRNA + S-adenosyl-L-homocysteine + H(+). Functionally, specifically methylates the cytosine at position 967 (m5C967) of 16S rRNA. The sequence is that of Ribosomal RNA small subunit methyltransferase B from Sodalis glossinidius (strain morsitans).